The primary structure comprises 317 residues: tRNA uridine(34) hydroxylase (317 aa).

The region spanning 129-223 is the Rhodanese domain; sequence TDPEVLLIDT…YLEEVPEQES (95 aa). Cys-183 (cysteine persulfide intermediate) is an active-site residue. The segment at 298–317 is disordered; the sequence is AKARNQPHPIGRNYRLPSEA.

It belongs to the TrhO family.

It carries out the reaction uridine(34) in tRNA + AH2 + O2 = 5-hydroxyuridine(34) in tRNA + A + H2O. Its function is as follows. Catalyzes oxygen-dependent 5-hydroxyuridine (ho5U) modification at position 34 in tRNAs. In Pseudomonas syringae pv. tomato (strain ATCC BAA-871 / DC3000), this protein is tRNA uridine(34) hydroxylase.